The primary structure comprises 149 residues: General odorant-binding protein 99b (149 aa).

Residues 1 to 16 form the signal peptide; sequence MKVLIVLLLGLAFVLA. 3 disulfides stabilise this stretch: Cys40-Cys71, Cys67-Cys125, and Cys114-Cys134.

Belongs to the PBP/GOBP family. In terms of tissue distribution, expressed in adult olfactory system. Expressed in subsets of sensilla in both olfactory organs, the maxillary palps, and third antennal segments.

The protein resides in the secreted. Functionally, present in the aqueous fluid surrounding olfactory sensory dendrites and are thought to aid in the capture and transport of hydrophobic odorants into and through this fluid. The chain is General odorant-binding protein 99b (Obp99b) from Drosophila melanogaster (Fruit fly).